We begin with the raw amino-acid sequence, 144 residues long: Large ribosomal subunit protein uL13 (144 aa).

It belongs to the universal ribosomal protein uL13 family. As to quaternary structure, part of the 50S ribosomal subunit.

This protein is one of the early assembly proteins of the 50S ribosomal subunit, although it is not seen to bind rRNA by itself. It is important during the early stages of 50S assembly. In Syntrophomonas wolfei subsp. wolfei (strain DSM 2245B / Goettingen), this protein is Large ribosomal subunit protein uL13.